Reading from the N-terminus, the 450-residue chain is Glutamate-1-semialdehyde 2,1-aminomutase (450 aa).

Lys262 carries the post-translational modification N6-(pyridoxal phosphate)lysine.

This sequence belongs to the class-III pyridoxal-phosphate-dependent aminotransferase family. HemL subfamily. Homodimer. Pyridoxal 5'-phosphate serves as cofactor.

The protein localises to the cytoplasm. The enzyme catalyses (S)-4-amino-5-oxopentanoate = 5-aminolevulinate. It participates in porphyrin-containing compound metabolism; protoporphyrin-IX biosynthesis; 5-aminolevulinate from L-glutamyl-tRNA(Glu): step 2/2. In Campylobacter hominis (strain ATCC BAA-381 / DSM 21671 / CCUG 45161 / LMG 19568 / NCTC 13146 / CH001A), this protein is Glutamate-1-semialdehyde 2,1-aminomutase.